The sequence spans 397 residues: Elongation factor Tu (397 aa).

In terms of domain architecture, tr-type G spans 10–207; it reads KPHCNIGTIG…AVDEYIPQPE (198 aa). Residues 19–26 form a G1 region; it reads GHVDHGKT. 19–26 contributes to the GTP binding site; that stretch reads GHVDHGKT. T26 contacts Mg(2+). The interval 61-65 is G2; that stretch reads GITIS. A G3 region spans residues 82–85; it reads DCPG. GTP contacts are provided by residues 82 to 86 and 137 to 140; these read DCPGH and NKVD. Positions 137–140 are G4; sequence NKVD. The tract at residues 175–177 is G5; the sequence is SAL.

The protein belongs to the TRAFAC class translation factor GTPase superfamily. Classic translation factor GTPase family. EF-Tu/EF-1A subfamily. As to quaternary structure, monomer.

The protein localises to the cytoplasm. It catalyses the reaction GTP + H2O = GDP + phosphate + H(+). GTP hydrolase that promotes the GTP-dependent binding of aminoacyl-tRNA to the A-site of ribosomes during protein biosynthesis. The sequence is that of Elongation factor Tu from Zymomonas mobilis subsp. mobilis (strain ATCC 31821 / ZM4 / CP4).